The sequence spans 444 residues: MSEMTPREIVHELDSHIIGQDKAKRSVAIALRNRWRRMQLAPELRTEVTPKNILMIGPTGVGKTEIARRLAKLANAPFIKVEATKFTEVGYVGKEVESIIRDLTDVAIKMTHQQAVEKVKFRAEEHAEDRILDILLPPARDAWGNNEEGNNDSGTRQSFRKKLREGKLDDKEIEVDVAAPQVGVEIMAPPGMEEMTNQLQGMFQNLSGGNTTKKRKMKIVDALKALTEEEGAKLVNPEELKEQAIFNVENHGIVFIDEIDKICKGSNSHSGDVSREGVQRDLLPLVEGSTVSTKHGMVKTDHMLFITSGAFQMAKPSDLIPELQGRLPIRVELEALTADDFKRILTEPNASLTEQYIALLATENVKVEFTEDGISRIAESAFQVNETTENIGARRLHTVMERLMEEISYDASEKNGESLIVDAEYVSSRLGELVADEDLSRFIL.

ATP is bound by residues isoleucine 18 and 60–65 (GVGKTE). The segment at 141 to 161 (DAWGNNEEGNNDSGTRQSFRK) is disordered. Residues 147–157 (EEGNNDSGTRQ) are compositionally biased toward polar residues. Aspartate 257, glutamate 322, and arginine 394 together coordinate ATP.

Belongs to the ClpX chaperone family. HslU subfamily. As to quaternary structure, a double ring-shaped homohexamer of HslV is capped on each side by a ring-shaped HslU homohexamer. The assembly of the HslU/HslV complex is dependent on binding of ATP.

The protein resides in the cytoplasm. Its function is as follows. ATPase subunit of a proteasome-like degradation complex; this subunit has chaperone activity. The binding of ATP and its subsequent hydrolysis by HslU are essential for unfolding of protein substrates subsequently hydrolyzed by HslV. HslU recognizes the N-terminal part of its protein substrates and unfolds these before they are guided to HslV for hydrolysis. The chain is ATP-dependent protease ATPase subunit HslU from Aliivibrio fischeri (strain ATCC 700601 / ES114) (Vibrio fischeri).